A 378-amino-acid polypeptide reads, in one-letter code: Erythronate-4-phosphate dehydrogenase (378 aa).

S45 and T66 together coordinate substrate. The NAD(+) site is built by D146 and T175. The active site involves R208. Residue D232 participates in NAD(+) binding. E237 is a catalytic residue. H254 functions as the Proton donor in the catalytic mechanism. G257 serves as a coordination point for NAD(+). Y258 contacts substrate.

Belongs to the D-isomer specific 2-hydroxyacid dehydrogenase family. PdxB subfamily. In terms of assembly, homodimer.

It is found in the cytoplasm. It catalyses the reaction 4-phospho-D-erythronate + NAD(+) = (R)-3-hydroxy-2-oxo-4-phosphooxybutanoate + NADH + H(+). Its pathway is cofactor biosynthesis; pyridoxine 5'-phosphate biosynthesis; pyridoxine 5'-phosphate from D-erythrose 4-phosphate: step 2/5. Its function is as follows. Catalyzes the oxidation of erythronate-4-phosphate to 3-hydroxy-2-oxo-4-phosphonooxybutanoate. This Salmonella arizonae (strain ATCC BAA-731 / CDC346-86 / RSK2980) protein is Erythronate-4-phosphate dehydrogenase.